Reading from the N-terminus, the 152-residue chain is Large ribosomal subunit protein bL9 (152 aa).

The protein belongs to the bacterial ribosomal protein bL9 family.

In terms of biological role, binds to the 23S rRNA. The sequence is that of Large ribosomal subunit protein bL9 from Synechococcus sp. (strain CC9605).